The sequence spans 523 residues: Alpha,alpha-trehalose-phosphate synthase [UDP-forming] (523 aa).

Y98 and D152 together coordinate D-glucose 6-phosphate. Positions 288 and 293 each coordinate UDP. Residues R288 and K293 each coordinate UDP-alpha-D-glucose. Position 326 (R326) interacts with D-glucose 6-phosphate. 387–395 contacts UDP-alpha-D-glucose; it reads DGMNLVSYE. A UDP-binding site is contributed by 391–395; sequence LVSYE. A disordered region spans residues 503-523; sequence QQFNLGEQREEGRLEPGEFDD. Over residues 509–523 the composition is skewed to basic and acidic residues; that stretch reads EQREEGRLEPGEFDD.

The protein belongs to the glycosyltransferase 20 family.

It carries out the reaction D-glucose 6-phosphate + UDP-alpha-D-glucose = alpha,alpha-trehalose 6-phosphate + UDP + H(+). The protein operates within carbohydrate biosynthesis. Functionally, synthase catalytic subunit of the trehalose synthase complex that catalyzes the production of trehalose from glucose-6-phosphate and UDP-alpha-D-glucose in a two step process. The disaccharide trehalose serves as a storage carbohydrate that is mobilized during conidial germination. Trehalose also serves as a protectant for cell integrity during stress. The protein is Alpha,alpha-trehalose-phosphate synthase [UDP-forming] of Botryotinia fuckeliana (strain B05.10) (Noble rot fungus).